Consider the following 369-residue polypeptide: Mitogen-activated protein kinase 4 (369 aa).

The 288-residue stretch at 32 to 319 (YVPIKPIGRG…VTEALEHPYM (288 aa)) folds into the Protein kinase domain. Residues 38–46 (IGRGAYGIV) and lysine 61 each bind ATP. The active-site Proton acceptor is the aspartate 158. At threonine 191 the chain carries Phosphothreonine. The TXY motif lies at 191-193 (TEY). Tyrosine 193 carries the post-translational modification Phosphotyrosine.

The protein belongs to the protein kinase superfamily. CMGC Ser/Thr protein kinase family. MAP kinase subfamily. Post-translationally, dually phosphorylated on Thr-191 and Tyr-193, which activates the enzyme. In terms of tissue distribution, expressed in leaves and panicles.

It catalyses the reaction L-seryl-[protein] + ATP = O-phospho-L-seryl-[protein] + ADP + H(+). It carries out the reaction L-threonyl-[protein] + ATP = O-phospho-L-threonyl-[protein] + ADP + H(+). With respect to regulation, activated by threonine and tyrosine phosphorylation. This is Mitogen-activated protein kinase 4 (MPK4) from Oryza sativa subsp. japonica (Rice).